Here is a 66-residue protein sequence, read N- to C-terminus: DNA gyrase inhibitor YacG (66 aa).

Zn(2+) contacts are provided by C9, C12, C28, and C32. Residues 45-66 are disordered; the sequence is HKIAGAEESEDELYSGDLEPRH.

It belongs to the DNA gyrase inhibitor YacG family. In terms of assembly, interacts with GyrB. It depends on Zn(2+) as a cofactor.

Functionally, inhibits all the catalytic activities of DNA gyrase by preventing its interaction with DNA. Acts by binding directly to the C-terminal domain of GyrB, which probably disrupts DNA binding by the gyrase. The chain is DNA gyrase inhibitor YacG from Pseudomonas entomophila (strain L48).